The primary structure comprises 505 residues: tRNA-2-methylthio-N(6)-dimethylallyladenosine synthase (505 aa).

Positions 14–132 (RTYEVRTYGC…LPVLLERARV (119 aa)) constitute an MTTase N-terminal domain. [4Fe-4S] cluster contacts are provided by Cys-23, Cys-61, Cys-95, Cys-169, Cys-173, and Cys-176. Residues 155-386 (RESAYAAWVS…ALQEEISWDE (232 aa)) form the Radical SAM core domain. One can recognise a TRAM domain in the interval 388–456 (KKQVGRTLEL…PHHLLAEGAV (69 aa)).

Belongs to the methylthiotransferase family. MiaB subfamily. Monomer. It depends on [4Fe-4S] cluster as a cofactor.

The protein resides in the cytoplasm. The catalysed reaction is N(6)-dimethylallyladenosine(37) in tRNA + (sulfur carrier)-SH + AH2 + 2 S-adenosyl-L-methionine = 2-methylsulfanyl-N(6)-dimethylallyladenosine(37) in tRNA + (sulfur carrier)-H + 5'-deoxyadenosine + L-methionine + A + S-adenosyl-L-homocysteine + 2 H(+). Its function is as follows. Catalyzes the methylthiolation of N6-(dimethylallyl)adenosine (i(6)A), leading to the formation of 2-methylthio-N6-(dimethylallyl)adenosine (ms(2)i(6)A) at position 37 in tRNAs that read codons beginning with uridine. This chain is tRNA-2-methylthio-N(6)-dimethylallyladenosine synthase, found in Streptomyces coelicolor (strain ATCC BAA-471 / A3(2) / M145).